We begin with the raw amino-acid sequence, 132 residues long: Small ribosomal subunit protein uS11 (132 aa).

A disordered region spans residues 113 to 132; sequence VTPIPHDGTRAPGGKRGRRV.

The protein belongs to the universal ribosomal protein uS11 family. Part of the 30S ribosomal subunit.

Its function is as follows. Located on the platform of the 30S subunit. The chain is Small ribosomal subunit protein uS11 from Methanocella arvoryzae (strain DSM 22066 / NBRC 105507 / MRE50).